We begin with the raw amino-acid sequence, 65 residues long: 7 kDa A-type inclusion protein (65 aa).

Polar residues predominate over residues 1 to 20; that stretch reads MSNQNIPQLSEYQTSVSQVA. Positions 1-32 are disordered; the sequence is MSNQNIPQLSEYQTSVSQVAVTPPPKPKTPQI.

The polypeptide is 7 kDa A-type inclusion protein (Bos taurus (Bovine)).